Consider the following 243-residue polypeptide: Probable phosphatase CLI_3563 (243 aa).

Residues histidine 8, histidine 10, histidine 16, histidine 41, glutamate 74, histidine 102, histidine 132, aspartate 192, and histidine 194 each coordinate Zn(2+).

The protein belongs to the PHP family. Zn(2+) is required as a cofactor.

This Clostridium botulinum (strain Langeland / NCTC 10281 / Type F) protein is Probable phosphatase CLI_3563.